Consider the following 418-residue polypeptide: UDP-N-acetylglucosamine 1-carboxyvinyltransferase (418 aa).

22–23 is a binding site for phosphoenolpyruvate; sequence KN. A UDP-N-acetyl-alpha-D-glucosamine-binding site is contributed by Arg92. Cys116 acts as the Proton donor in catalysis. Cys116 is modified (2-(S-cysteinyl)pyruvic acid O-phosphothioketal). Residues Asp305 and Ile327 each contribute to the UDP-N-acetyl-alpha-D-glucosamine site.

Belongs to the EPSP synthase family. MurA subfamily.

It localises to the cytoplasm. It carries out the reaction phosphoenolpyruvate + UDP-N-acetyl-alpha-D-glucosamine = UDP-N-acetyl-3-O-(1-carboxyvinyl)-alpha-D-glucosamine + phosphate. Its pathway is cell wall biogenesis; peptidoglycan biosynthesis. In terms of biological role, cell wall formation. Adds enolpyruvyl to UDP-N-acetylglucosamine. The sequence is that of UDP-N-acetylglucosamine 1-carboxyvinyltransferase from Gluconobacter oxydans (strain 621H) (Gluconobacter suboxydans).